We begin with the raw amino-acid sequence, 175 residues long: Gamma-crystallin A (175 aa).

Beta/gamma crystallin 'Greek key' domains lie at 2–40 (GKIT…RVDV) and 41–83 (HSWF…RLIP). The connecting peptide stretch occupies residues 84–88 (QHTGT). 2 Beta/gamma crystallin 'Greek key' domains span residues 89 to 129 (FRMR…RVLE) and 130 to 172 (GSWV…RRVM).

Belongs to the beta/gamma-crystallin family.

Its function is as follows. Crystallins are the dominant structural components of the vertebrate eye lens. This chain is Gamma-crystallin A (CRYGA), found in Bos taurus (Bovine).